The chain runs to 459 residues: MEGRANSPGEPRAWPTRSVLCRGCVEPLVFLANFALVLQGPVTTQYLWHRFSADLGYNGTRHRDSCSNHSVDPIAQEVETLTSHWTLYMNVGGFLVGLFSSTLLGAWSDCVGRRPLLVLASLGLLLQTVLSIFVVQLHLHIGYLVLGRILCALLGDFSGLLAASFASVADVSSSRTRTIRMALLEACIGVAGMLASFIGGFLLQEQVYVNPFWLALAVLTVMTLYAAFCFGETVKERTPTRLFTLRHHRSVIQLYVTQAPEKSRKHLALYSLAIFVMITVHLGAQDILTLYELSAPLCWDSRLISYGSAAQQLPYLTSLLGLRLLQYCLADTWVAEIGLVFNILGMMVFAFATITPLMFTGYGLLFLSLVVTPIIRAKLSRLVRQSEQGALFSALACVNGLAMLMASGIFNSLYPATLNLMKGFPFLLAAGLLFIPAILMGILERDNHCPEFQEFSQSP.

N-acetylmethionine is present on methionine 1. Residues methionine 1–valine 25 lie on the Cytoplasmic side of the membrane. A helical transmembrane segment spans residues glutamate 26 to threonine 44. Residues glutamine 45–threonine 82 lie on the Extracellular side of the membrane. N-linked (GlcNAc...) asparagine glycosylation is found at asparagine 58 and asparagine 68. Cysteine 66 and cysteine 298 are oxidised to a cystine. The chain crosses the membrane as a helical span at residues serine 83–serine 108. The Cytoplasmic portion of the chain corresponds to aspartate 109–glycine 112. The helical transmembrane segment at arginine 113–valine 135 threads the bilayer. Residues glutamine 136 to histidine 140 lie on the Extracellular side of the membrane. A helical membrane pass occupies residues isoleucine 141–leucine 154. The Cytoplasmic segment spans residues glycine 155 to arginine 177. 2 residues coordinate H(+): aspartate 156 and glutamate 185. A helical membrane pass occupies residues threonine 178–leucine 203. Residues glutamine 204–tyrosine 208 are Extracellular-facing. The chain crosses the membrane as a helical span at residues valine 209–alanine 227. Residues phenylalanine 228–histidine 266 lie on the Cytoplasmic side of the membrane. A helical transmembrane segment spans residues leucine 267–threonine 289. H(+) is bound at residue histidine 281. At leucine 290 to arginine 302 the chain is on the extracellular side. Residues leucine 303–leucine 325 traverse the membrane as a helical segment. Residues glutamine 326–aspartate 331 are Cytoplasmic-facing. A helical transmembrane segment spans residues threonine 332–phenylalanine 351. Residues alanine 352–threonine 355 are Extracellular-facing. The helical transmembrane segment at proline 356–arginine 376 threads the bilayer. At alanine 377–glutamine 388 the chain is on the cytoplasmic side. Residues glycine 389 to tyrosine 414 traverse the membrane as a helical segment. The Extracellular portion of the chain corresponds to proline 415–lysine 422. Residues glycine 423 to glycine 441 form a helical membrane-spanning segment. Over isoleucine 442–proline 459 the chain is Cytoplasmic. Residue serine 458 is modified to Phosphoserine.

The protein belongs to the major facilitator superfamily. SLC46A family. As to quaternary structure, monomer. In terms of tissue distribution, expressed in retina and retinal pigment epithelium.

It is found in the cell membrane. The protein localises to the apical cell membrane. Its subcellular location is the basolateral cell membrane. The protein resides in the endosome membrane. It localises to the cytoplasm. It catalyses the reaction folate(in) + H(+)(in) = folate(out) + H(+)(out). The enzyme catalyses (6S)-5-methyl-5,6,7,8-tetrahydrofolate(in) + H(+)(in) = (6S)-5-methyl-5,6,7,8-tetrahydrofolate(out) + H(+)(out). The catalysed reaction is methotrexate(in) + H(+)(in) = methotrexate(out) + H(+)(out). It carries out the reaction pemetrexed(in) + H(+)(in) = pemetrexed(out) + H(+)(out). In terms of biological role, proton-coupled folate symporter that mediates folate absorption using an H(+) gradient as a driving force. Involved in the intestinal absorption of folates at the brush-border membrane of the proximal jejunum, and the transport from blood to cerebrospinal fluid across the choroid plexus. Functions at acidic pH via alternate outward- and inward-open conformation states. Protonation of residues in the outward open state primes the protein for transport. Binding of folate promotes breaking of salt bridge network and subsequent closure of the extracellular gate, leading to the inward-open state and release of protons and folate. Also able to transport antifolate drugs, such as methotrexate and pemetrexed. Involved in FOLR1-mediated endocytosis by serving as a route of export of folates from acidified endosomes. Also acts as a lower-affinity, pH-independent heme carrier protein and constitutes the main importer of heme in the intestine. Imports heme in the retina and retinal pigment epithelium, in neurons of the hippocampus, in hepatocytes and in the renal epithelial cells. Hence, participates in the trafficking of heme and increases intracellular iron content. This Bos taurus (Bovine) protein is Proton-coupled folate transporter.